Reading from the N-terminus, the 235-residue chain is Sugar fermentation stimulation protein homolog (235 aa).

The protein belongs to the SfsA family.

This Pseudomonas paraeruginosa (strain DSM 24068 / PA7) (Pseudomonas aeruginosa (strain PA7)) protein is Sugar fermentation stimulation protein homolog.